We begin with the raw amino-acid sequence, 185 residues long: Prenylated Rab acceptor protein 1 (185 aa).

Residues Met-1–Tyr-78 are Cytoplasmic-facing. The interval Ala-30–Phe-54 is required for interaction with prenylated RAB3A and VAMP2. 2 helical membrane-spanning segments follow: residues Val-79 to Pro-94 and Met-95 to Leu-112. At Arg-113–Gln-131 the chain is on the cytoplasmic side. 2 consecutive transmembrane segments (helical) span residues Tyr-132 to Ala-148 and Gly-149 to Ser-165. Residues Ser-165–Val-185 are required for interaction with GDI1. Topologically, residues His-166–Val-185 are cytoplasmic. The required for interaction with prenylated RAB3A and VAMP2 stretch occupies residues Val-175 to Val-185. Residues Val-175–Val-185 are homodimerization.

Belongs to the PRA1 family. Homodimer. Interacts with VAMP2 (synaptobrevin-2), prenylated Rab proteins, GDI1, NDRG1 and PCLO.

The protein localises to the cell membrane. It localises to the cytoplasm. The protein resides in the golgi apparatus. It is found in the cytoplasmic vesicle. Its subcellular location is the secretory vesicle. The protein localises to the synaptic vesicle. General Rab protein regulator required for vesicle formation from the Golgi complex. May control vesicle docking and fusion by mediating the action of Rab GTPases to the SNARE complexes. In addition it inhibits the removal of Rab GTPases from the membrane by GDI1. The chain is Prenylated Rab acceptor protein 1 (RABAC1) from Canis lupus familiaris (Dog).